A 78-amino-acid chain; its full sequence is Large ribosomal subunit protein bL28 (78 aa).

The segment at 1-20 is disordered; it reads MSQVCQVTGKRPVVGNNRSH.

This sequence belongs to the bacterial ribosomal protein bL28 family.

The polypeptide is Large ribosomal subunit protein bL28 (Idiomarina loihiensis (strain ATCC BAA-735 / DSM 15497 / L2-TR)).